A 513-amino-acid chain; its full sequence is 2-isopropylmalate synthase (513 aa).

A Pyruvate carboxyltransferase domain is found at 5–268 (LIIFDTTLRD…DVGVDTSQIV (264 aa)). Asp-14, His-202, His-204, and Asn-239 together coordinate Mn(2+). A regulatory domain region spans residues 394–513 (RFISLSQRSE…KAVQKINPQI (120 aa)).

It belongs to the alpha-IPM synthase/homocitrate synthase family. LeuA type 1 subfamily. As to quaternary structure, homodimer. Requires Mn(2+) as cofactor.

Its subcellular location is the cytoplasm. The enzyme catalyses 3-methyl-2-oxobutanoate + acetyl-CoA + H2O = (2S)-2-isopropylmalate + CoA + H(+). Its pathway is amino-acid biosynthesis; L-leucine biosynthesis; L-leucine from 3-methyl-2-oxobutanoate: step 1/4. Catalyzes the condensation of the acetyl group of acetyl-CoA with 3-methyl-2-oxobutanoate (2-ketoisovalerate) to form 3-carboxy-3-hydroxy-4-methylpentanoate (2-isopropylmalate). The polypeptide is 2-isopropylmalate synthase (Cupriavidus pinatubonensis (strain JMP 134 / LMG 1197) (Cupriavidus necator (strain JMP 134))).